Consider the following 476-residue polypeptide: Variant surface glycoprotein MITAT 1.2 (476 aa).

An N-terminal signal peptide occupies residues 1–26 (MPSNQEARLFLAVLVLAQVLPILVDS). Disulfide bonds link Cys41–Cys171 and Cys149–Cys213. A glycan (N-linked (GlcNAc...) asparagine) is linked at Asn289. 2 disordered regions span residues 389 to 418 (QKHK…CKSP) and 435 to 459 (EEAK…TGSS). 2 cysteine pairs are disulfide-bonded: Cys407-Cys419 and Cys415-Cys430. Residues 435-449 (EEAKKVADETAKDGK) are compositionally biased toward basic and acidic residues. The span at 450–459 (TGNTNTTGSS) shows a compositional bias: low complexity. An N-linked (GlcNAc...) asparagine glycan is attached at Asn454. A lipid anchor (GPI-anchor amidated serine) is attached at Ser459. A propeptide spans 460–476 (NSFVISKTPLWLAVLLF) (removed in mature form).

As to quaternary structure, homodimer.

The protein resides in the cell membrane. Functionally, VSG forms a coat on the surface of the parasite. The trypanosome evades the immune response of the host by expressing a series of antigenically distinct VSGs from an estimated 1000 VSG genes. This is Variant surface glycoprotein MITAT 1.2 from Trypanosoma brucei brucei.